We begin with the raw amino-acid sequence, 440 residues long: UDP-N-acetylmuramoylalanine--D-glutamate ligase (440 aa).

128 to 134 (GTNGKTT) is a binding site for ATP.

This sequence belongs to the MurCDEF family.

The protein resides in the cytoplasm. The enzyme catalyses UDP-N-acetyl-alpha-D-muramoyl-L-alanine + D-glutamate + ATP = UDP-N-acetyl-alpha-D-muramoyl-L-alanyl-D-glutamate + ADP + phosphate + H(+). Its pathway is cell wall biogenesis; peptidoglycan biosynthesis. Functionally, cell wall formation. Catalyzes the addition of glutamate to the nucleotide precursor UDP-N-acetylmuramoyl-L-alanine (UMA). The polypeptide is UDP-N-acetylmuramoylalanine--D-glutamate ligase (Lawsonia intracellularis (strain PHE/MN1-00)).